The chain runs to 530 residues: GMP synthase [glutamine-hydrolyzing] (530 aa).

The Glutamine amidotransferase type-1 domain occupies 4–205 (RILILDYGSQ…VREICGCEGD (202 aa)). Catalysis depends on Cys-84, which acts as the Nucleophile. Catalysis depends on residues His-179 and Glu-181. Residues 206-398 (WNMPDYISEA…LGLPPQMVYR (193 aa)) form the GMPS ATP-PPase domain. 233 to 239 (SGGVDSS) lines the ATP pocket.

In terms of assembly, homodimer.

The catalysed reaction is XMP + L-glutamine + ATP + H2O = GMP + L-glutamate + AMP + diphosphate + 2 H(+). It functions in the pathway purine metabolism; GMP biosynthesis; GMP from XMP (L-Gln route): step 1/1. In terms of biological role, catalyzes the synthesis of GMP from XMP. The protein is GMP synthase [glutamine-hydrolyzing] of Bordetella avium (strain 197N).